The chain runs to 278 residues: Serine protease 57 (278 aa).

Positions 1–31 (MVPGTGGGRDCLTLVVATALTQLLWLPGCCG) are cleaved as a signal peptide. Positions 34 to 263 (IVGGHEVKPH…FVSWIWDVVR (230 aa)) constitute a Peptidase S1 domain. A disulfide bridge links Cys59 with Cys75. Active-site charge relay system residues include His74 and Asp122. An N-linked (GlcNAc...) asparagine glycan is attached at Asn129. 3 cysteine pairs are disulfide-bonded: Cys157–Cys224, Cys188–Cys202, and Cys214–Cys239. Ser218 serves as the catalytic Charge relay system.

Belongs to the peptidase S1 family. After cleavage of the signal peptide, the N-terminus is probably further processed by CTSC. Processing by CTSC is probably required for accumulation in cytoplasmic granules; in the absence of CTSC the protein does not accumulate. In terms of processing, N-glycosylated.

It is found in the cytoplasmic granule lumen. The protein resides in the secreted. Its function is as follows. Serine protease that cleaves preferentially after Arg residues. Can also cleave after citrulline (deimidated arginine) and methylarginine residues. This chain is Serine protease 57 (Prss57), found in Rattus norvegicus (Rat).